A 301-amino-acid polypeptide reads, in one-letter code: E3 ubiquitin-protein ligase RNF144B (301 aa).

The segment at 26-242 is TRIAD supradomain; sequence PLVTCKLCLC…YDKGPCRNKL (217 aa). Cys30, Cys33, Cys53, Cys56, Cys121, Cys126, Cys145, Cys148, Cys153, Cys156, His161, Cys166, Cys191, and Cys194 together coordinate Zn(2+). An RING-type 1 zinc finger spans residues 30–80; the sequence is CKLCLCEQSLDKMTMLQECQCIFCTPCLKQYMVLSIREGCGSPITCPDMVC. The IBR-type zinc-finger motif lies at 101-166; it reads QLYQRLKFER…KDAWHEESSC (66 aa). The RING-type 2; atypical zinc-finger motif lies at 191–220; it reads CPVCRIYIERNEGCAQMMCKNCKHTFCWYC. Cys204 is a catalytic residue. Zn(2+) is bound by residues Cys209, Cys212, Cys217, Cys220, His232, and Cys238. The helical transmembrane segment at 256-276 threads the bilayer; it reads VVGILVGLGVIALVTSPLLLL.

It belongs to the RBR family. RNF144 subfamily. In terms of assembly, interacts with UBE2L3, UBE2L6 and LCMT2, as well as with BAX. Interacts with TBK1; this interaction inhibits TBK1 phosphorylation and 'Lys-63'-linked polyubiquitination. Post-translationally, auto-ubiquitinated.

The protein resides in the mitochondrion membrane. Its subcellular location is the cytoplasm. The enzyme catalyses [E2 ubiquitin-conjugating enzyme]-S-ubiquitinyl-L-cysteine + [acceptor protein]-L-lysine = [E2 ubiquitin-conjugating enzyme]-L-cysteine + [acceptor protein]-N(6)-ubiquitinyl-L-lysine.. The protein operates within protein modification; protein ubiquitination. E3 ubiquitin-protein ligase which accepts ubiquitin from E2 ubiquitin-conjugating enzymes UBE2L3 and UBE2L6 in the form of a thioester and then directly transfers the ubiquitin to targeted substrates such as LCMT2, thereby promoting their degradation. Induces apoptosis via a p53/TP53-dependent but caspase-independent mechanism. Plays a crucial role in maintaining the genomic stability by controlling the degradation of multiple proteins involved in mitotic progression and DNA damage. Regulates epithelial homeostasis by mediating degradation of CDKN1A and isoform 2 of TP63. Plays a regulatory role in innate immunity by negatively regulating IRF3 activation and IFN-beta production. Mechanistically, inhibits TBK1 phosphorylation and 'Lys-63'-linked polyubiquitination independently of its E3 ligase activity. Alternatively, promotes 'Lys-27' and 'Lys-33'-linked ubiquitination of IFIH1/MDA5, promoting selective autophagic degradation of IFIH1/MDA5 to inhibit antiviral response. The protein is E3 ubiquitin-protein ligase RNF144B (Rnf144b) of Mus musculus (Mouse).